The following is a 193-amino-acid chain: NADH-quinone oxidoreductase subunit B (193 aa).

4 residues coordinate [4Fe-4S] cluster: C72, C73, C137, and C167.

The protein belongs to the complex I 20 kDa subunit family. In terms of assembly, NDH-1 is composed of 14 different subunits. Subunits NuoB, C, D, E, F, and G constitute the peripheral sector of the complex. It depends on [4Fe-4S] cluster as a cofactor.

It is found in the cell inner membrane. It carries out the reaction a quinone + NADH + 5 H(+)(in) = a quinol + NAD(+) + 4 H(+)(out). Functionally, NDH-1 shuttles electrons from NADH, via FMN and iron-sulfur (Fe-S) centers, to quinones in the respiratory chain. The immediate electron acceptor for the enzyme in this species is believed to be ubiquinone. Couples the redox reaction to proton translocation (for every two electrons transferred, four hydrogen ions are translocated across the cytoplasmic membrane), and thus conserves the redox energy in a proton gradient. The polypeptide is NADH-quinone oxidoreductase subunit B (Rhizobium rhizogenes (strain K84 / ATCC BAA-868) (Agrobacterium radiobacter)).